The primary structure comprises 249 residues: UPF0246 protein EUBREC_1226 (249 aa).

It belongs to the UPF0246 family.

This chain is UPF0246 protein EUBREC_1226, found in Agathobacter rectalis (strain ATCC 33656 / DSM 3377 / JCM 17463 / KCTC 5835 / VPI 0990) (Eubacterium rectale).